The sequence spans 303 residues: Carboxypeptidase B (303 aa).

Residues 5 to 298 form the Peptidase M14 domain; the sequence is SYHDYDEINA…EGVKVVANFV (294 aa). Zn(2+)-binding residues include H63 and E66. Residues 63 to 66, R118, and 136 to 137 each bind substrate; these read HARE and NR. A Zn(2+)-binding site is contributed by H189. Residues 190 to 191 and Y241 each bind substrate; that span reads SY. E264 functions as the Proton donor/acceptor in the catalytic mechanism.

This sequence belongs to the peptidase M14 family. It depends on Zn(2+) as a cofactor.

The protein localises to the secreted. The catalysed reaction is Preferential release of a C-terminal lysine or arginine amino acid.. This Astacus astacus (Noble crayfish) protein is Carboxypeptidase B.